We begin with the raw amino-acid sequence, 341 residues long: Biotin synthase (341 aa).

In terms of domain architecture, Radical SAM core spans 43–266 (SEIQLSQLLS…IAVARIVCPK (224 aa)). The [4Fe-4S] cluster site is built by Cys58, Cys62, and Cys65. 4 residues coordinate [2Fe-2S] cluster: Cys102, Cys133, Cys193, and Arg270.

It belongs to the radical SAM superfamily. Biotin synthase family. In terms of assembly, homodimer. Requires [4Fe-4S] cluster as cofactor. [2Fe-2S] cluster serves as cofactor.

The enzyme catalyses (4R,5S)-dethiobiotin + (sulfur carrier)-SH + 2 reduced [2Fe-2S]-[ferredoxin] + 2 S-adenosyl-L-methionine = (sulfur carrier)-H + biotin + 2 5'-deoxyadenosine + 2 L-methionine + 2 oxidized [2Fe-2S]-[ferredoxin]. The protein operates within cofactor biosynthesis; biotin biosynthesis; biotin from 7,8-diaminononanoate: step 2/2. Its function is as follows. Catalyzes the conversion of dethiobiotin (DTB) to biotin by the insertion of a sulfur atom into dethiobiotin via a radical-based mechanism. This Caulobacter vibrioides (strain ATCC 19089 / CIP 103742 / CB 15) (Caulobacter crescentus) protein is Biotin synthase.